The chain runs to 223 residues: Probable transaldolase (223 aa).

Lys92 serves as the catalytic Schiff-base intermediate with substrate.

This sequence belongs to the transaldolase family. Type 3B subfamily.

Its subcellular location is the cytoplasm. It carries out the reaction D-sedoheptulose 7-phosphate + D-glyceraldehyde 3-phosphate = D-erythrose 4-phosphate + beta-D-fructose 6-phosphate. It participates in carbohydrate degradation; pentose phosphate pathway; D-glyceraldehyde 3-phosphate and beta-D-fructose 6-phosphate from D-ribose 5-phosphate and D-xylulose 5-phosphate (non-oxidative stage): step 2/3. Transaldolase is important for the balance of metabolites in the pentose-phosphate pathway. This is Probable transaldolase from Thermus thermophilus (strain ATCC BAA-163 / DSM 7039 / HB27).